The sequence spans 145 residues: MDVLVINGPNLNLLGTRQPRFYGHKTLADINNDLLKIAKENNINIDFYQSNHEGQIIDKIQQTAAKIIIINPAAFTHTSVAIRDAFLAINKPFIEIHLSNIYNREEFRTKSFLSDIAYGCIFGFGPNGYTLALIEAINYINMKGE.

Tyrosine 22 acts as the Proton acceptor in catalysis. Substrate-binding residues include asparagine 71, histidine 77, and aspartate 84. Histidine 97 acts as the Proton donor in catalysis. Substrate-binding positions include 98–99 and arginine 108; that span reads LS.

The protein belongs to the type-II 3-dehydroquinase family. As to quaternary structure, homododecamer.

The catalysed reaction is 3-dehydroquinate = 3-dehydroshikimate + H2O. It functions in the pathway metabolic intermediate biosynthesis; chorismate biosynthesis; chorismate from D-erythrose 4-phosphate and phosphoenolpyruvate: step 3/7. In terms of biological role, catalyzes a trans-dehydration via an enolate intermediate. The polypeptide is 3-dehydroquinate dehydratase (Francisella tularensis subsp. mediasiatica (strain FSC147)).